The following is a 154-amino-acid chain: Cyanate hydratase (154 aa).

Active-site residues include Arg-100, Glu-103, and Ser-126.

This sequence belongs to the cyanase family.

The enzyme catalyses cyanate + hydrogencarbonate + 3 H(+) = NH4(+) + 2 CO2. In terms of biological role, catalyzes the reaction of cyanate with bicarbonate to produce ammonia and carbon dioxide. In Aspergillus fumigatus (strain ATCC MYA-4609 / CBS 101355 / FGSC A1100 / Af293) (Neosartorya fumigata), this protein is Cyanate hydratase.